The chain runs to 105 residues: dATP/dGTP diphosphohydrolase (105 aa).

This sequence belongs to the Caudovirales dATP/dGTP diphosphohydrolase family. Co(2+) serves as cofactor.

The catalysed reaction is dGTP + H2O = dGMP + diphosphate + H(+). The enzyme catalyses dATP + H2O = dAMP + diphosphate + H(+). The protein operates within purine metabolism. Catalyzes the hydrolysis of dGTP into dGMP, which is needed among other for the first step of biosynthesis of dZTP (2-amino-2'-deoxyadenosine-5'-triphosphate). This chain is dATP/dGTP diphosphohydrolase, found in Cyanophage S-2L (Cyanobacteria phage S-2L).